A 341-amino-acid polypeptide reads, in one-letter code: HTH-type transcriptional repressor PurR (341 aa).

Residues 2-56 form the HTH lacI-type domain; sequence ATIKDVAKRAGVSTTTVSHVINKTRFVAENTRAAVWAAIKELNYSPSAVARSLKV. The H-T-H motif DNA-binding region spans 4-23; it reads IKDVAKRAGVSTTTVSHVIN. The DNA-binding element occupies 48–56; the sequence is SAVARSLKV. Positions 73, 190, 192, 221, and 275 each coordinate hypoxanthine.

As to quaternary structure, homodimer.

Its pathway is purine metabolism; purine nucleotide biosynthesis [regulation]. Is the main repressor of the genes involved in the de novo synthesis of purine nucleotides, regulating purB, purC, purEK, purF, purHD, purL, purMN and guaBA expression. PurR is allosterically activated to bind its cognate DNA by binding the purine corepressors, hypoxanthine or guanine, thereby effecting transcription repression. This is HTH-type transcriptional repressor PurR from Proteus mirabilis (strain HI4320).